The chain runs to 395 residues: F-box protein At5g46170 (395 aa).

The F-box domain occupies 24–72; the sequence is IDHFDHLPDSILLLVFNKIGDVKALGRCCVVSRRFHSLVPQVDNVVVRV. Residues 122-158 are disordered; that stretch reads TKRSSSSCGGSGSSSSSLSISGDDDGGEIEQGGVTHH. A compositionally biased stretch (low complexity) spans 125 to 142; it reads SSSSCGGSGSSSSSLSIS.

In Arabidopsis thaliana (Mouse-ear cress), this protein is F-box protein At5g46170.